A 280-amino-acid chain; its full sequence is Dermonecrotic toxin LgSicTox-alphaIC1 (280 aa).

The active site involves His12. Glu32 and Asp34 together coordinate Mg(2+). Catalysis depends on His48, which acts as the Nucleophile. Disulfide bonds link Cys52–Cys58 and Cys54–Cys197. Asp92 contacts Mg(2+).

It belongs to the arthropod phospholipase D family. Class II subfamily. It depends on Mg(2+) as a cofactor. As to expression, expressed by the venom gland.

It localises to the secreted. It catalyses the reaction an N-(acyl)-sphingosylphosphocholine = an N-(acyl)-sphingosyl-1,3-cyclic phosphate + choline. The catalysed reaction is an N-(acyl)-sphingosylphosphoethanolamine = an N-(acyl)-sphingosyl-1,3-cyclic phosphate + ethanolamine. It carries out the reaction a 1-acyl-sn-glycero-3-phosphocholine = a 1-acyl-sn-glycero-2,3-cyclic phosphate + choline. The enzyme catalyses a 1-acyl-sn-glycero-3-phosphoethanolamine = a 1-acyl-sn-glycero-2,3-cyclic phosphate + ethanolamine. Functionally, dermonecrotic toxins cleave the phosphodiester linkage between the phosphate and headgroup of certain phospholipids (sphingolipid and lysolipid substrates), forming an alcohol (often choline) and a cyclic phosphate. This toxin acts on sphingomyelin (SM) with high activity. It may also act on ceramide phosphoethanolamine (CPE), lysophosphatidylcholine (LPC) and lysophosphatidylethanolamine (LPE), but not on lysophosphatidylserine (LPS), and lysophosphatidylglycerol (LPG). It acts by transphosphatidylation, releasing exclusively cyclic phosphate products as second products. Induces platelet aggregation in platelet rich plasma, but not in washed platelet, indicating that this activity is dependent on plasma components. Also induces hemolysis. In vivo, the recombinant protein evokes an intense inflammatory reaction and dermonecrosis, similar to those induced by L.gaucho total venom. Is a good immunogen, capable of inducing immunoprotection in test animals. Its function is as follows. Anionic antimicrobial peptide that shows antimicrobial activity against Gram-negative bacteria (MIC=1.15-4.6 uM) (tested on E.coli, P.aeruginosa, and E.cloacae), but not on Gram-negative bacteria (M.luteus, S.aureus, and B.subtilis), neither on fungi and yeasts (A.niger, C.albicans and C.krusei). Does not show hemolytic effects against human erythrocytes, and has no cytotoxic effects against human cervical carcinoma cells (HeLa). This chain is Dermonecrotic toxin LgSicTox-alphaIC1, found in Loxosceles gaucho (Spider).